A 421-amino-acid polypeptide reads, in one-letter code: UDP-N-acetylglucosamine 1-carboxyvinyltransferase (421 aa).

Phosphoenolpyruvate is bound at residue 22–23 (KN). Arg-93 is a binding site for UDP-N-acetyl-alpha-D-glucosamine. The active-site Proton donor is the Cys-117. Cys-117 bears the 2-(S-cysteinyl)pyruvic acid O-phosphothioketal mark. Residues 122-126 (RPVDL), Asp-308, and Leu-330 contribute to the UDP-N-acetyl-alpha-D-glucosamine site.

The protein belongs to the EPSP synthase family. MurA subfamily.

It localises to the cytoplasm. The enzyme catalyses phosphoenolpyruvate + UDP-N-acetyl-alpha-D-glucosamine = UDP-N-acetyl-3-O-(1-carboxyvinyl)-alpha-D-glucosamine + phosphate. It participates in cell wall biogenesis; peptidoglycan biosynthesis. Cell wall formation. Adds enolpyruvyl to UDP-N-acetylglucosamine. In Wolinella succinogenes (strain ATCC 29543 / DSM 1740 / CCUG 13145 / JCM 31913 / LMG 7466 / NCTC 11488 / FDC 602W) (Vibrio succinogenes), this protein is UDP-N-acetylglucosamine 1-carboxyvinyltransferase.